Reading from the N-terminus, the 345-residue chain is NADPH dehydrogenase (345 aa).

23 to 26 lines the FMN pocket; the sequence is SPMC. Position 28 (Tyr-28) interacts with substrate. FMN is bound by residues Ala-60 and Gln-102. 164–167 contributes to the substrate binding site; that stretch reads HGAH. FMN contacts are provided by residues Arg-215 and 307-308; that span reads GR.

The protein belongs to the NADH:flavin oxidoreductase/NADH oxidase family. NamA subfamily. In terms of assembly, homotetramer. It depends on FMN as a cofactor.

It carries out the reaction A + NADPH + H(+) = AH2 + NADP(+). Its function is as follows. Catalyzes the reduction of the double bond of an array of alpha,beta-unsaturated aldehydes and ketones. It also reduces the nitro group of nitroester and nitroaromatic compounds. It could have a role in detoxification processes. The polypeptide is NADPH dehydrogenase (Bacillus cereus (strain AH820)).